The primary structure comprises 63 residues: Jingdongin-1 (63 aa).

Residues 1-22 (MLTLKKSMLLLFFLGTINLSLC) form the signal peptide. Residues 23–44 (EQERDADEEERRDDDEMDVEVE) constitute a propeptide that is removed on maturation. Residues C57 and C63 are joined by a disulfide bond.

Expressed by the skin glands.

It localises to the secreted. In terms of biological role, the synthetic peptide has antimicrobial activity against Gram-negative bacterium B.dysenteriae (MIC=35 ug/ml), against Gram-positive bacteria S.aureus ATCC 2592 (MIC=4.7 ug/ml) and B.subtilis ATCC 6633 (MIC=9.38 ug/ml) and against fungus C.albicans (MIC=18.75 ug/ml). Has no activity against Gram-negative bacterium E.coli ATCC 25922 but exhibits low hemolytic activity at concentrations up to 200 ug/ml. The protein is Jingdongin-1 of Amolops jingdongensis (Chinese torrent frog).